A 206-amino-acid polypeptide reads, in one-letter code: Large ribosomal subunit protein uL4 (206 aa).

The interval Thr-48–Tyr-97 is disordered. Basic residues predominate over residues Lys-63–Arg-72.

It belongs to the universal ribosomal protein uL4 family. As to quaternary structure, part of the 50S ribosomal subunit.

Functionally, one of the primary rRNA binding proteins, this protein initially binds near the 5'-end of the 23S rRNA. It is important during the early stages of 50S assembly. It makes multiple contacts with different domains of the 23S rRNA in the assembled 50S subunit and ribosome. Its function is as follows. Forms part of the polypeptide exit tunnel. In Anaeromyxobacter dehalogenans (strain 2CP-C), this protein is Large ribosomal subunit protein uL4.